Here is a 115-residue protein sequence, read N- to C-terminus: UPF0597 protein HI_0855 (115 aa).

It belongs to the UPF0597 family.

This is UPF0597 protein HI_0855 from Haemophilus influenzae (strain ATCC 51907 / DSM 11121 / KW20 / Rd).